A 424-amino-acid chain; its full sequence is 3-oxo-tetronate kinase (424 aa).

ATP-binding positions include serine 260, 364–367 (GGET), and glycine 407.

Belongs to the four-carbon acid sugar kinase family.

The enzyme catalyses 3-dehydro-L-erythronate + ATP = 3-dehydro-4-O-phospho-L-erythronate + ADP + H(+). It catalyses the reaction 3-dehydro-D-erythronate + ATP = 3-dehydro-4-O-phospho-D-erythronate + ADP + H(+). Functionally, catalyzes the ATP-dependent phosphorylation of 3-oxo-tetronate to 3-oxo-tetronate 4-phosphate. The sequence is that of 3-oxo-tetronate kinase from Pectobacterium atrosepticum (strain SCRI 1043 / ATCC BAA-672) (Erwinia carotovora subsp. atroseptica).